A 57-amino-acid chain; its full sequence is NADH dehydrogenase [ubiquinone] 1 beta subcomplex subunit 1 (57 aa).

Residues 10–26 (HWVHILVPAGFVFGCYL) traverse the membrane as a helical segment.

Belongs to the complex I NDUFB1 subunit family. Complex I is composed of 45 different subunits.

The protein localises to the mitochondrion inner membrane. Accessory subunit of the mitochondrial membrane respiratory chain NADH dehydrogenase (Complex I) that is believed not to be involved in catalysis. Complex I functions in the transfer of electrons from NADH to the respiratory chain. The immediate electron acceptor for the enzyme is believed to be ubiquinone. The polypeptide is NADH dehydrogenase [ubiquinone] 1 beta subcomplex subunit 1 (Ndufb1) (Mus musculus (Mouse)).